Here is a 92-residue protein sequence, read N- to C-terminus: Small ribosomal subunit protein uS19c (92 aa).

The protein belongs to the universal ribosomal protein uS19 family.

The protein localises to the plastid. It localises to the chloroplast. Protein S19 forms a complex with S13 that binds strongly to the 16S ribosomal RNA. This is Small ribosomal subunit protein uS19c from Vitis vinifera (Grape).